The following is a 346-amino-acid chain: Haptoglobin (346 aa).

Positions 1-18 (MRALGAVVTLLLWGQLFA) are cleaved as a signal peptide. Residues 31 to 87 (DSCPKPPEIENGYVEHLVRYRCQHYRLRTEGDGVYTLNSEKQWVNTAAGERLPECEA) enclose the Sushi domain. 4 cysteine pairs are disulfide-bonded: cysteine 52-cysteine 85, cysteine 89-cysteine 206, cysteine 249-cysteine 280, and cysteine 291-cysteine 321. Positions 102–344 (IIGGSLDAKG…FLDWIQETMA (243 aa)) constitute a Peptidase S1 domain. Asparagine 147 and asparagine 181 each carry an N-linked (GlcNAc...) asparagine glycan. Residues 258-263 (VPEKEG) are interaction with CD163.

The protein belongs to the peptidase S1 family. As to quaternary structure, tetramer of two alpha and two beta chains; disulfide-linked. The hemoglobin/haptoglobin complex is composed of a haptoglobin dimer bound to two hemoglobin alpha-beta dimers. Interacts with CD163. Interacts with ERGIC3. As to expression, expressed by the liver and secreted in plasma.

It is found in the secreted. Its function is as follows. As a result of hemolysis, hemoglobin is found to accumulate in the kidney and is secreted in the urine. Haptoglobin captures, and combines with free plasma hemoglobin to allow hepatic recycling of heme iron and to prevent kidney damage. Haptoglobin also acts as an antioxidant, has antibacterial activity and plays a role in modulating many aspects of the acute phase response. Hemoglobin/haptoglobin complexes are rapidly cleared by the macrophage CD163 scavenger receptor expressed on the surface of liver Kupfer cells through an endocytic lysosomal degradation pathway. The polypeptide is Haptoglobin (HP) (Mesocricetus auratus (Golden hamster)).